Consider the following 172-residue polypeptide: S-ribosylhomocysteine lyase (172 aa).

Positions 54, 58, and 128 each coordinate Fe cation.

Belongs to the LuxS family. As to quaternary structure, homodimer. The cofactor is Fe cation.

It catalyses the reaction S-(5-deoxy-D-ribos-5-yl)-L-homocysteine = (S)-4,5-dihydroxypentane-2,3-dione + L-homocysteine. In terms of biological role, involved in the synthesis of autoinducer 2 (AI-2) which is secreted by bacteria and is used to communicate both the cell density and the metabolic potential of the environment. The regulation of gene expression in response to changes in cell density is called quorum sensing. Catalyzes the transformation of S-ribosylhomocysteine (RHC) to homocysteine (HC) and 4,5-dihydroxy-2,3-pentadione (DPD). This Vibrio atlanticus (strain LGP32) (Vibrio splendidus (strain Mel32)) protein is S-ribosylhomocysteine lyase.